The chain runs to 533 residues: Protein mono-ADP-ribosyltransferase PARP3 (533 aa).

The disordered stretch occupies residues 1–30 (MAPKPKPWVQTEGPEKKKGRQAGREEDPFR). Lys6 bears the N6-(ADP-ribosyl)lysine mark. 4 positions are modified to ADP-ribosyl glutamic acid: Glu12, Glu15, Glu26, and Glu34. The short motif at 14–20 (PEKKKGR) is the Nuclear localization signal element. Lys37 is subject to N6-(ADP-ribosyl)lysine. Residues 59–150 (GTQVYEDYNC…DHFVSHPGKY (92 aa)) form the WGR domain. ADP-ribosyl aspartic acid is present on Asp141. Glu163 bears the ADP-ribosyl glutamic acid mark. One can recognise a PARP alpha-helical domain in the interval 182-300 (PCSLDPATQK…DIELAQALQA (119 aa)). Asp210 carries the ADP-ribosyl aspartic acid modification. ADP-ribosyl glutamic acid is present on residues Glu231, Glu309, Glu310, Glu344, and Glu449. Residues 313-533 (HPLDRDYQLL…RLRYLLEVHL (221 aa)) enclose the PARP catalytic domain. The segment at 454 to 482 (TDNPSLKSPPPGFDSVIARGHTEPDPTQD) is disordered.

Belongs to the ARTD/PARP family. As to quaternary structure, interacts with PARP1; leading to activate PARP1 in absence of DNA. Interacts with PRKDC. Interacts with XRCC5/Ku80; the interaction is dependent on nucleic acids. Interacts with XRCC6/Ku70; the interaction is dependent on nucleic acids. Interacts with EZH2, HDAC1, HDAC2, SUZ12, YY1, LRIG3 and LIG4. In terms of processing, auto-mono-ADP-ribosylated. Widely expressed; the highest levels are in the kidney, skeletal muscle, liver, heart and spleen; also detected in pancreas, lung, placenta, brain, leukocytes, colon, small intestine, ovary, testis, prostate and thymus.

Its subcellular location is the nucleus. The protein localises to the chromosome. It is found in the cytoplasm. It localises to the cytoskeleton. The protein resides in the microtubule organizing center. Its subcellular location is the centrosome. The protein localises to the centriole. The enzyme catalyses L-aspartyl-[protein] + NAD(+) = 4-O-(ADP-D-ribosyl)-L-aspartyl-[protein] + nicotinamide. It catalyses the reaction L-glutamyl-[protein] + NAD(+) = 5-O-(ADP-D-ribosyl)-L-glutamyl-[protein] + nicotinamide. It carries out the reaction L-lysyl-[protein] + NAD(+) = N(6)-(ADP-D-ribosyl)-L-lysyl-[protein] + nicotinamide + H(+). With respect to regulation, mono-ADP-ribosyltransferase activity of PARP3 is selectively inhibited by ME0328 compound; ME0328 does not inhibit other ARTD/PARP enzymes, such as PARP1. Mono-ADP-ribosyltransferase is strongly inhibited by KU0058948 compound. In terms of biological role, mono-ADP-ribosyltransferase that mediates mono-ADP-ribosylation of target proteins and plays a key role in the response to DNA damage. Mediates mono-ADP-ribosylation of glutamate, aspartate or lysine residues on target proteins. In contrast to PARP1 and PARP2, it is not able to mediate poly-ADP-ribosylation. Involved in DNA repair by mediating mono-ADP-ribosylation of a limited number of acceptor proteins involved in chromatin architecture and in DNA metabolism, such as histone H2B, XRCC5 and XRCC6. ADP-ribosylation follows DNA damage and appears as an obligatory step in a detection/signaling pathway leading to the reparation of DNA strand breaks. Involved in single-strand break repair by catalyzing mono-ADP-ribosylation of histone H2B on 'Glu-2' (H2BE2ADPr) of nucleosomes containing nicked DNA. Cooperates with the XRCC5-XRCC6 (Ku80-Ku70) heterodimer to limit end-resection thereby promoting accurate NHEJ. Suppresses G-quadruplex (G4) structures in response to DNA damage. Associates with a number of DNA repair factors and is involved in the response to exogenous and endogenous DNA strand breaks. Together with APLF, promotes the retention of the LIG4-XRCC4 complex on chromatin and accelerate DNA ligation during non-homologous end-joining (NHEJ). May link the DNA damage surveillance network to the mitotic fidelity checkpoint. Acts as a negative regulator of immunoglobulin class switch recombination, probably by controlling the level of AICDA /AID on the chromatin. In addition to proteins, also able to ADP-ribosylate DNA: mediates DNA mono-ADP-ribosylation of DNA strand break termini via covalent addition of a single ADP-ribose moiety to a 5'- or 3'-terminal phosphate residues in DNA containing multiple strand breaks. This chain is Protein mono-ADP-ribosyltransferase PARP3, found in Homo sapiens (Human).